A 344-amino-acid polypeptide reads, in one-letter code: tRNA N6-adenosine threonylcarbamoyltransferase (344 aa).

Residues histidine 112 and histidine 116 each coordinate Fe cation. Residues 134 to 138 (LASGG), aspartate 167, glycine 180, and asparagine 280 each bind substrate. Aspartate 308 lines the Fe cation pocket.

Belongs to the KAE1 / TsaD family. The cofactor is Fe(2+).

The protein localises to the cytoplasm. The enzyme catalyses L-threonylcarbamoyladenylate + adenosine(37) in tRNA = N(6)-L-threonylcarbamoyladenosine(37) in tRNA + AMP + H(+). Functionally, required for the formation of a threonylcarbamoyl group on adenosine at position 37 (t(6)A37) in tRNAs that read codons beginning with adenine. Is involved in the transfer of the threonylcarbamoyl moiety of threonylcarbamoyl-AMP (TC-AMP) to the N6 group of A37, together with TsaE and TsaB. TsaD likely plays a direct catalytic role in this reaction. The protein is tRNA N6-adenosine threonylcarbamoyltransferase of Rickettsia conorii (strain ATCC VR-613 / Malish 7).